The following is a 523-amino-acid chain: Peptide chain release factor 3 (523 aa).

Positions 8-275 (KKRRTFAIIS…TFLEYAPEPH (268 aa)) constitute a tr-type G domain. GTP is bound by residues 17-24 (SHPDAGKT), 85-89 (DTPGH), and 139-142 (NKLD).

The protein belongs to the TRAFAC class translation factor GTPase superfamily. Classic translation factor GTPase family. PrfC subfamily.

It is found in the cytoplasm. Functionally, increases the formation of ribosomal termination complexes and stimulates activities of RF-1 and RF-2. It binds guanine nucleotides and has strong preference for UGA stop codons. It may interact directly with the ribosome. The stimulation of RF-1 and RF-2 is significantly reduced by GTP and GDP, but not by GMP. In Lactococcus lactis subsp. cremoris (strain SK11), this protein is Peptide chain release factor 3.